We begin with the raw amino-acid sequence, 217 residues long: Ribosomal RNA small subunit methyltransferase G (217 aa).

Residues Gly85, Leu90, 135–136, and Arg149 contribute to the S-adenosyl-L-methionine site; that span reads IE.

This sequence belongs to the methyltransferase superfamily. RNA methyltransferase RsmG family.

The protein localises to the cytoplasm. The catalysed reaction is guanosine(527) in 16S rRNA + S-adenosyl-L-methionine = N(7)-methylguanosine(527) in 16S rRNA + S-adenosyl-L-homocysteine. Functionally, specifically methylates the N7 position of guanine in position 527 of 16S rRNA. The chain is Ribosomal RNA small subunit methyltransferase G from Acidiphilium cryptum (strain JF-5).